The primary structure comprises 450 residues: Solute carrier family 52, riboflavin transporter, member 2 (450 aa).

The next 5 helical transmembrane spans lie at 14–34 (LLVA…WVEL), 47–67 (LPSY…LVTL), 86–106 (GLGI…APVA), 112–132 (VAFL…NVTF), and 147–167 (FFLG…GQGV). N-linked (GlcNAc...) asparagine glycosylation occurs at Asn-178. A helical membrane pass occupies residues 201-221 (FFWVLTALLGTSAAAFQGLLL). Over residues 227–236 (TSEPTTGTGL) the composition is skewed to low complexity. A disordered region spans residues 227–264 (TSEPTTGTGLRVETPGTEEEEEEEEASPLQEPPGQVAG). Acidic residues predominate over residues 242–252 (GTEEEEEEEEA). The next 5 helical transmembrane spans lie at 282 to 302 (ACLL…LPAV), 317 to 337 (LAVV…MAVL), 344 to 364 (LCGL…LAAL), 369 to 389 (PLVG…LCAG), and 409 to 429 (ALLA…VAMF).

The protein belongs to the riboflavin transporter family.

It localises to the cell membrane. The enzyme catalyses riboflavin(in) = riboflavin(out). Its activity is regulated as follows. Riboflavin transport is Na(+)-independent but moderately pH-sensitive. Activity is strongly inhibited by riboflavin analogs, such as lumiflavin. Weakly inhibited by flavin adenine dinucleotide (FAD) and flavin mononucleotide (FMN). Its function is as follows. Plasma membrane transporter mediating the uptake by cells of the water soluble vitamin B2/riboflavin that plays a key role in biochemical oxidation-reduction reactions of the carbohydrate, lipid, and amino acid metabolism. May also act as a receptor for 4-hydroxybutyrate. The chain is Solute carrier family 52, riboflavin transporter, member 2 (Slc52a2) from Mus musculus (Mouse).